The sequence spans 132 residues: ATP synthase epsilon chain (132 aa).

Belongs to the ATPase epsilon chain family. As to quaternary structure, F-type ATPases have 2 components, CF(1) - the catalytic core - and CF(0) - the membrane proton channel. CF(1) has five subunits: alpha(3), beta(3), gamma(1), delta(1), epsilon(1). CF(0) has three main subunits: a, b and c.

It localises to the cell inner membrane. In terms of biological role, produces ATP from ADP in the presence of a proton gradient across the membrane. The chain is ATP synthase epsilon chain from Gloeobacter violaceus (strain ATCC 29082 / PCC 7421).